The chain runs to 160 residues: Aspartate 1-decarboxylase 2 (160 aa).

The Schiff-base intermediate with substrate; via pyruvic acid role is filled by Ser-25. The residue at position 25 (Ser-25) is a Pyruvic acid (Ser). Thr-57 contributes to the substrate binding site. The active-site Proton donor is the Tyr-58. 73-75 provides a ligand contact to substrate; the sequence is GAA.

It belongs to the PanD family. In terms of assembly, heterooctamer of four alpha and four beta subunits. Pyruvate serves as cofactor. In terms of processing, is synthesized initially as an inactive proenzyme, which is activated by self-cleavage at a specific serine bond to produce a beta-subunit with a hydroxyl group at its C-terminus and an alpha-subunit with a pyruvoyl group at its N-terminus.

The protein resides in the cytoplasm. It catalyses the reaction L-aspartate + H(+) = beta-alanine + CO2. The protein operates within cofactor biosynthesis; (R)-pantothenate biosynthesis; beta-alanine from L-aspartate: step 1/1. Its function is as follows. Catalyzes the pyruvoyl-dependent decarboxylation of aspartate to produce beta-alanine. This is Aspartate 1-decarboxylase 2 from Frankia casuarinae (strain DSM 45818 / CECT 9043 / HFP020203 / CcI3).